A 384-amino-acid polypeptide reads, in one-letter code: Prokineticin receptor 2 (384 aa).

The Extracellular segment spans residues 1–53; that stretch reads MAAQNGNASFPANFSIPQEHASSLPFNFSYDDYDLPLDEDEDMTKTQTFFAAK. N7, N13, and N27 each carry an N-linked (GlcNAc...) asparagine glycan. The helical transmembrane segment at 54 to 74 threads the bilayer; that stretch reads IVIGVALVGIMLTCGIGNFVF. The Cytoplasmic segment spans residues 75 to 89; that stretch reads ITALTRYKKLRNLTN. The chain crosses the membrane as a helical span at residues 90-110; that stretch reads LLIANLAISDFLVAIICCPFE. Over 111–137 the chain is Extracellular; that stretch reads MDYYVVHQLSWEHGHVLCACINYLRTV. Residues C128 and C208 are joined by a disulfide bond. The chain crosses the membrane as a helical span at residues 138 to 158; it reads SLYVSTNALLAIAIDRYLAIV. The Cytoplasmic segment spans residues 159 to 171; it reads HPLKPRMNYQTAS. Residues 172-192 form a helical membrane-spanning segment; sequence FLIALVWMVSILISIPSAYFT. Residues 193 to 223 are Extracellular-facing; the sequence is KETVLFIVKNQKKIFCGQVWPVDQQLYYKSY. The chain crosses the membrane as a helical span at residues 224-244; the sequence is FLFVFGIEFLGPVFTMTLCYA. At 245-273 the chain is on the cytoplasmic side; the sequence is RISRELWFKAVPGFQTEQIRKRLRCRRKT. The chain crosses the membrane as a helical span at residues 274–294; the sequence is VLVLMCILTAYVLCWAPFYGF. Residues 295–313 lie on the Extracellular side of the membrane; the sequence is TIVRDFFPTVFVKEKHYLT. The helical transmembrane segment at 314–334 threads the bilayer; it reads AFYVVECIAMSNSMINTVCFV. Over 335–384 the chain is Cytoplasmic; sequence TVKNSTMKYFKKMLLLHWRPSHHGSKSSADLDLKTSRLPATEEVDCIRLK.

It belongs to the G-protein coupled receptor 1 family. As to quaternary structure, homodimer.

Its subcellular location is the cell membrane. Receptor for prokineticin 2. Exclusively coupled to the G(q) subclass of heteromeric G proteins. Activation leads to mobilization of calcium, stimulation of phosphoinositide turnover and activation of p44/p42 mitogen-activated protein kinase. The polypeptide is Prokineticin receptor 2 (PROKR2) (Bos taurus (Bovine)).